A 342-amino-acid polypeptide reads, in one-letter code: tRNA dimethylallyltransferase (342 aa).

39 to 46 (GPTGSGKT) lines the ATP pocket. 41 to 46 (TGSGKT) serves as a coordination point for substrate. An interaction with substrate tRNA region spans residues 64–67 (DSMQ).

It belongs to the IPP transferase family. In terms of assembly, monomer. Requires Mg(2+) as cofactor.

The catalysed reaction is adenosine(37) in tRNA + dimethylallyl diphosphate = N(6)-dimethylallyladenosine(37) in tRNA + diphosphate. Functionally, catalyzes the transfer of a dimethylallyl group onto the adenine at position 37 in tRNAs that read codons beginning with uridine, leading to the formation of N6-(dimethylallyl)adenosine (i(6)A). The protein is tRNA dimethylallyltransferase of Chlamydia abortus (strain DSM 27085 / S26/3) (Chlamydophila abortus).